Reading from the N-terminus, the 688-residue chain is Methionine--tRNA ligase (688 aa).

A 'HIGH' region motif is present at residues 13–23 (PYANGPIHIGH). 4 residues coordinate Zn(2+): Cys144, Cys147, Cys157, and Cys160. The 'KMSKS' region signature appears at 334–338 (KMSKS). Lys337 provides a ligand contact to ATP. In terms of domain architecture, tRNA-binding spans 582–688 (DFAKIDLRVA…AGAVPGMRVR (107 aa)).

The protein belongs to the class-I aminoacyl-tRNA synthetase family. MetG type 1 subfamily. As to quaternary structure, homodimer. Zn(2+) is required as a cofactor.

The protein resides in the cytoplasm. The enzyme catalyses tRNA(Met) + L-methionine + ATP = L-methionyl-tRNA(Met) + AMP + diphosphate. In terms of biological role, is required not only for elongation of protein synthesis but also for the initiation of all mRNA translation through initiator tRNA(fMet) aminoacylation. The polypeptide is Methionine--tRNA ligase (Ralstonia nicotianae (strain ATCC BAA-1114 / GMI1000) (Ralstonia solanacearum)).